Here is a 177-residue protein sequence, read N- to C-terminus: Early nodulin-like protein 6 (177 aa).

An N-terminal signal peptide occupies residues methionine 1–cysteine 23. In terms of domain architecture, Phytocyanin spans threonine 24–glutamate 127. The N-linked (GlcNAc...) asparagine glycan is linked to asparagine 41. A disulfide bond links cysteine 81 and cysteine 115. A lipid anchor (GPI-anchor amidated asparagine) is attached at asparagine 149. The propeptide at histidine 150 to valine 177 is removed in mature form.

Belongs to the early nodulin-like (ENODL) family. Confined to flowers.

It is found in the cell membrane. Functionally, may act as a carbohydrate transporter. In Arabidopsis thaliana (Mouse-ear cress), this protein is Early nodulin-like protein 6.